We begin with the raw amino-acid sequence, 813 residues long: Valine--tRNA ligase (813 aa).

Residues 46–56 carry the 'HIGH' region motif; the sequence is PTVSGQLHIGH. The 'KMSKS' region signature appears at 536–540; it reads KMSKS. Lys539 provides a ligand contact to ATP.

The protein belongs to the class-I aminoacyl-tRNA synthetase family. ValS type 2 subfamily. Monomer.

Its subcellular location is the cytoplasm. The catalysed reaction is tRNA(Val) + L-valine + ATP = L-valyl-tRNA(Val) + AMP + diphosphate. In terms of biological role, catalyzes the attachment of valine to tRNA(Val). As ValRS can inadvertently accommodate and process structurally similar amino acids such as threonine, to avoid such errors, it has a 'posttransfer' editing activity that hydrolyzes mischarged Thr-tRNA(Val) in a tRNA-dependent manner. This is Valine--tRNA ligase from Rickettsia canadensis (strain McKiel).